Consider the following 910-residue polypeptide: p53-induced death domain-containing protein 1 (910 aa).

Residues 1–25 (MAATVEGPELEAAAAAGDASEDSDA) form a disordered region. N-acetylalanine is present on Ala-2. LRR repeat units lie at residues 126-147 (HLAHLDLSFNSLETLPACVLQM), 149-171 (GLGALLLSHNCLSELPEALGALP), 172-194 (ALTFLTVTHNRLQTLPPALGALS), 195-216 (TLQRLDLSQNLLDTLPPEIGGL), 218-240 (SLLELNLASNRLQSLPASLAGLR), 241-263 (SLRLLVLHSNLLASVPADLARLP), and 264-285 (LLTRLDLRDNQLRDLPPELLDA). Phosphoserine is present on residues Ser-299 and Ser-305. ZU5 domains are found at residues 322 to 454 (DLDS…VSRP) and 455 to 596 (VSNA…WYTT). Peptidase S68 stretches follow at residues 423–452 (DLETYLEEEAPQRLWAHCQVPHFSWFLVVS) and 566–594 (DITAQVVLELTHLYARFQVTHFSWYWLWY). Catalysis depends on residues His-444, Ser-446, His-586, and Ser-588. The tract at residues 580-716 (ARFQVTHFSW…TTTLDREAQA (137 aa)) is UPA domain. Residues 788 to 873 (TQSNLLSVAG…DVAEEVRAVL (86 aa)) enclose the Death domain. The segment at 884–910 (IRRMGLAPKDPALPGSSAPQPPEPAQA) is disordered.

In terms of assembly, forms a complex named the PIDDosome with CASP2 and CRADD. Forms a complex with IKBKG and RIPK1. Interacts with FADD and MADD. Post-translationally, undergoes autoproteolytic processing whose extent either directs cells towards survival or apoptotic pathways. Autoproteolytically cleaved into two main fragments PIDD-N and PIDD-C. PIDD-C can be further processed into PIDD-CC, a processing which is enhanced by DNA damage. The cleavage producing PIDD-C is required for translocation of PIDD1 to the nucleus upon DNA damage and activation of NF-kappa-B. PIDD-CC mediates the interaction with CRADD and the cleavage producing PIDD-CC is required for the activation of CASP2. PIDD-N remains associated with PIDD-C and PIDD-CC after cleavage. In terms of tissue distribution, ubiquitous.

It is found in the cytoplasm. The protein localises to the nucleus. In terms of biological role, component of the DNA damage/stress response pathway that functions downstream of p53/TP53 and can either promote cell survival or apoptosis. Associated with CRADD and the CASP2 caspase, it forms the PIDDosome a complex that activates CASP2 and triggers apoptosis. Associated with IKBKG and RIPK1, it enhances sumoylation and ubiquitination of IKBKG which is important for activation of the transcription factor NF-kappa-B. The protein is p53-induced death domain-containing protein 1 of Homo sapiens (Human).